The chain runs to 789 residues: Larval serum protein 1 beta chain (789 aa).

Positions 1–16 (MKIAIALLACLGLAAA) are cleaved as a signal peptide.

This sequence belongs to the hemocyanin family. In terms of assembly, heterohexamer, composed of three subunits, alpha, beta and gamma. In terms of tissue distribution, larval hemolymph.

The protein resides in the secreted. It is found in the extracellular space. Larval storage protein (LSP) which may serve as a store of amino acids for synthesis of adult proteins. This is Larval serum protein 1 beta chain (Lsp1beta) from Drosophila melanogaster (Fruit fly).